The following is a 166-amino-acid chain: Transcriptional repressor NrdR (166 aa).

Residues Cys-3–Cys-34 fold into a zinc finger. One can recognise an ATP-cone domain in the interval Leu-46–Asp-136.

It belongs to the NrdR family. The cofactor is Zn(2+).

In terms of biological role, negatively regulates transcription of bacterial ribonucleotide reductase nrd genes and operons by binding to NrdR-boxes. This is Transcriptional repressor NrdR from Paenarthrobacter aurescens (strain TC1).